Here is a 116-residue protein sequence, read N- to C-terminus: Large ribosomal subunit protein bL17 (116 aa).

It belongs to the bacterial ribosomal protein bL17 family. As to quaternary structure, part of the 50S ribosomal subunit. Contacts protein L32.

The chain is Large ribosomal subunit protein bL17 from Dictyoglomus thermophilum (strain ATCC 35947 / DSM 3960 / H-6-12).